The primary structure comprises 471 residues: Ribosomal protein uS12 methylthiotransferase RimO (471 aa).

Residues 2 to 122 (IKVSLISLGC…VAPIIQEIYA (121 aa)) form the MTTase N-terminal domain. [4Fe-4S] cluster is bound by residues Cys11, Cys47, Cys84, Cys166, Cys170, and Cys173. One can recognise a Radical SAM core domain in the interval 152-395 (LTPKHFAYVK…MALQKQIAAD (244 aa)). Residues 398-458 (KTYVGRTLRV…DYDLLALPPG (61 aa)) enclose the TRAM domain.

The protein belongs to the methylthiotransferase family. RimO subfamily. Requires [4Fe-4S] cluster as cofactor.

Its subcellular location is the cytoplasm. It catalyses the reaction L-aspartate(89)-[ribosomal protein uS12]-hydrogen + (sulfur carrier)-SH + AH2 + 2 S-adenosyl-L-methionine = 3-methylsulfanyl-L-aspartate(89)-[ribosomal protein uS12]-hydrogen + (sulfur carrier)-H + 5'-deoxyadenosine + L-methionine + A + S-adenosyl-L-homocysteine + 2 H(+). Its function is as follows. Catalyzes the methylthiolation of an aspartic acid residue of ribosomal protein uS12. This is Ribosomal protein uS12 methylthiotransferase RimO from Opitutus terrae (strain DSM 11246 / JCM 15787 / PB90-1).